The primary structure comprises 442 residues: Chitinase-like protein Idgf4 (442 aa).

The first 21 residues, 1 to 21 (MKLYALFSLLVGSLAIGQISA), serve as a signal peptide directing secretion. The GH18 domain occupies 25–442 (HHLLCYYDGN…PILRQVKSKL (418 aa)). A disulfide bridge connects residues cysteine 29 and cysteine 56. Residue asparagine 224 is glycosylated (N-linked (GlcNAc...) asparagine). Cysteine 343 and cysteine 426 form a disulfide bridge.

It belongs to the glycosyl hydrolase 18 family. IDGF subfamily. In terms of processing, glycosylated. As to expression, primarily expressed in yolk cells and fat body. In larvae, it is expressed in the imaginal ring, the salivary duct, large salivary gland cells and weakly expressed in imaginal disks. More strongly expressed than Idgf1 and Idgf3.

The protein localises to the secreted. Functionally, cooperates with insulin-like peptides to stimulate the proliferation, polarization and motility of imaginal disk cells. May act by stabilizing the binding of insulin-like peptides to its receptor through a simultaneous interaction with both molecules to form a multiprotein signaling complex. The protein is Chitinase-like protein Idgf4 (Idgf4) of Drosophila melanogaster (Fruit fly).